The primary structure comprises 123 residues: Protein lgg-1 (123 aa).

G116 carries Phosphatidylethanolamine amidated glycine lipidation. The propeptide at 117–123 (GEVEKKE) is removed in mature form.

Belongs to the ATG8 family. In terms of assembly, interacts with sepa-1 (via the LIR motifs); the interaction is direct. Interacts with allo-1 (via the LIR motif). Interacts with sqst-1 (via the LIR motifs); the interaction is direct. Both lipidated and unlipidated forms interact with epg-7 (via the LIR motif); the interaction is direct. Interacts with epg-2 (via the LIR motifs); the interaction is direct. Interacts with atg-13; the interaction is direct. Interacts with unc-51 (via the LIR motif); the interaction is direct. Interacts with atg-7; the interaction is direct. Interacts with atg-3. The interaction with atg-7 and atg-3 may be required for the lipidation of lgg-1. In terms of processing, cleaved by atg-4.1 and/or atg-4.2, after Gly-116 to form a thioester bond with 'Cys-523' of atg-7 (E1-like activating enzyme) before being transferred to 'Cys-255' of atg-3 (E2 conjugating enzyme), in order to be amidated with phosphatidylethanolamine. This lipid modification anchors lgg-1 to membranes and can be reversed by atg-4.2, releasing soluble lgg-1. C-terminal cleavage is essential for autophagosome initiation and biogenesis. Lipidation is not essential for autophagy or development but the lipidated form is involved in cargo recognition and autophagosome biogenesis. Lipidation regulates lgg-2-positive autophagosome formation. As to expression, expressed in PLML touch receptor neuron and in the ventral nerve cord. Expressed in AIY interneurons.

The protein localises to the preautophagosomal structure. It is found in the cytoplasmic vesicle. It localises to the autophagosome. The protein resides in the autophagosome membrane. Its subcellular location is the lysosome lumen. The protein localises to the mitochondrion. It is found in the cytoplasm. It localises to the phagosome membrane. The protein resides in the cell membrane. Its subcellular location is the cell projection. The protein localises to the dendrite. It is found in the perikaryon. Functionally, ubiquitin-like modifier involved in the formation of autophagosomal vacuoles (autophagosomes). When lipidated mediates tethering between adjacent membranes and stimulates membrane fusion during autophagy. Recruits lipidated-lgg-2 to maturing autophagosomes. Acts in the aggrephagy pathway, which is the macroautophagic degradation of ubiquitinated protein aggregates, and preferentially interacts with autophagy proteins and substrates containing LIR motifs to mediate autophagosome formation and protein aggregate degradation. In particular, binds to components of the unc-51-atg-13 complex to regulate autophagosome formation and cargo sequestration. Required for the degradation of specific sepa-1- and sqst-1-containing protein aggregates during embryogenesis. Involved in allophagy, which is an autophagic process in which paternal mitochondria and organelles are degraded during fertilization, and moreover is required for the formation of lgg-2-positive allophagic autophagosomes in embryos. Involved in the clearance of apoptotic cells by promoting the delivery of engulfed apoptotic cells to the lysosome. Plays a role in the distribution and clearance of germ cell specific P-granules from somatic cells. Also plays a role in the autophagy-mediated degradation of ribosomal RNA and ribosomal proteins in lysosomes. Involved in xenophagy, the autophagy-mediated degradation of pathogens and pathogen products, such as toxins. Required for normal survival when exposed to pathogenic bacteria S.typhimurium probably by promoting autophagic degradation of intracellular S.typhimurium. Also plays a role in membrane-pore repair. Plays a role in mitophagy. Essential for dauer development and longevity, including longevity in response to moderate, short-term heat shock, also known as a hormetic heat shock. This chain is Protein lgg-1, found in Caenorhabditis elegans.